We begin with the raw amino-acid sequence, 125 residues long: Holo-[acyl-carrier-protein] synthase (125 aa).

D8 and E56 together coordinate Mg(2+).

It belongs to the P-Pant transferase superfamily. AcpS family. Mg(2+) is required as a cofactor.

The protein localises to the cytoplasm. The enzyme catalyses apo-[ACP] + CoA = holo-[ACP] + adenosine 3',5'-bisphosphate + H(+). Functionally, transfers the 4'-phosphopantetheine moiety from coenzyme A to a Ser of acyl-carrier-protein. This Borrelia hermsii (strain HS1 / DAH) protein is Holo-[acyl-carrier-protein] synthase.